A 585-amino-acid polypeptide reads, in one-letter code: Switch-associated protein 70 (585 aa).

In terms of domain architecture, PH spans aspartate 210–histidine 306. Residues histidine 316–histidine 529 adopt a coiled-coil conformation. The tract at residues alanine 347–glutamate 373 is disordered. Positions lysine 351–glutamate 373 are enriched in basic and acidic residues.

As to quaternary structure, the SWAP complex consists of NPM1, NCL, PARP1 and SWAP70. In terms of processing, tyrosine-phosphorylated. As to expression, spleen. Expressed only in B-cells that have been induced to switch to various Ig isotypes.

The protein localises to the cytoplasm. It is found in the cell membrane. Its subcellular location is the nucleus. The protein resides in the cell projection. It localises to the lamellipodium. The protein localises to the cytoskeleton. In terms of biological role, phosphatidylinositol 3,4,5-trisphosphate-dependent guanine nucleotide exchange factor (GEF) which, independently of RAS, transduces signals from tyrosine kinase receptors to RAC. It also mediates signaling of membrane ruffling. Regulates the actin cytoskeleton as an effector or adapter protein in response to agonist stimulated phosphatidylinositol (3,4)-bisphosphate production and cell protrusion. The chain is Switch-associated protein 70 (Swap70) from Mus musculus (Mouse).